A 390-amino-acid polypeptide reads, in one-letter code: Cathepsin D (390 aa).

Positions 1 to 44 (VIRIPLHKFTSIRRTMSEAAGXVXXLIAKGPISKYATGEPAVRQ) are cleaved as a propeptide — activation peptide. The Peptidase A1 domain occupies 59–385 (YYGEIGIGTP…DRDQNRVGLA (327 aa)). Intrachain disulfides connect Cys71-Cys140 and Cys90-Cys97. Asp77 is a catalytic residue. N-linked (GlcNAc...) asparagine glycans are attached at residues Asn114 and Asn241. An intrachain disulfide couples Cys264 to Cys268. The active site involves Asp273. Cys307 and Cys344 are oxidised to a cystine.

Belongs to the peptidase A1 family. As to quaternary structure, consists of a light chain and a heavy chain. Interacts with ADAM30; this leads to activation of CTSD. Interacts with GRN; stabilizes CTSD; increases its proteolytic activity. Post-translationally, N- and O-glycosylated. In terms of processing, undergoes proteolytic cleavage and activation by ADAM30.

It localises to the lysosome. Its subcellular location is the melanosome. It is found in the secreted. The protein resides in the extracellular space. It carries out the reaction Specificity similar to, but narrower than, that of pepsin A. Does not cleave the 4-Gln-|-His-5 bond in B chain of insulin.. In terms of biological role, acid protease active in intracellular protein breakdown. Plays a role in APP processing following cleavage and activation by ADAM30 which leads to APP degradation. This is Cathepsin D (CTSD) from Bos taurus (Bovine).